A 101-amino-acid polypeptide reads, in one-letter code: Small ribosomal subunit protein bS18c (101 aa).

It belongs to the bacterial ribosomal protein bS18 family. As to quaternary structure, part of the 30S ribosomal subunit.

It is found in the plastid. The protein localises to the chloroplast. In Aethionema cordifolium (Lebanon stonecress), this protein is Small ribosomal subunit protein bS18c.